Here is a 99-residue protein sequence, read N- to C-terminus: Large ribosomal subunit protein bL27 (99 aa).

Residues 1–12 constitute a propeptide that is removed on maturation; sequence MMINNLEALKLF. The segment at 15–36 is disordered; sequence HKGGGSTANGRNSAGRRLGAKR.

It belongs to the bacterial ribosomal protein bL27 family. In terms of processing, the N-terminus is cleaved by ribosomal processing cysteine protease Prp.

In Lactobacillus johnsonii (strain CNCM I-12250 / La1 / NCC 533), this protein is Large ribosomal subunit protein bL27.